The sequence spans 301 residues: Cell division protein kinase 2 homolog CRK1 (301 aa).

In terms of domain architecture, Protein kinase spans Tyr5 to Phe297. ATP contacts are provided by residues Ile11–Val19 and Lys34. Residue Asp127 is the Proton acceptor of the active site. A Phosphothreonine; by CAK modification is found at Thr160.

It belongs to the protein kinase superfamily. CMGC Ser/Thr protein kinase family. CDC2/CDKX subfamily. As to quaternary structure, forms a stable but non-covalent complex with a regulatory subunit and with a cyclin.

It catalyses the reaction [DNA-directed RNA polymerase] + ATP = phospho-[DNA-directed RNA polymerase] + ADP + H(+). With respect to regulation, phosphorylation at Thr-15 or Tyr-16 inactivates the enzyme, while phosphorylation at Thr-160 activates it. Its function is as follows. May be involved in some stage-specific role in the promastigote cell cycle. The sequence is that of Cell division protein kinase 2 homolog CRK1 (CRK1) from Leishmania mexicana.